The primary structure comprises 1142 residues: Serine/threonine-protein kinase dst2 (1142 aa).

Positions 20–276 (FELIEEIAEG…ATELLKHPFV (257 aa)) constitute a Protein kinase domain. Residues 26–34 (IAEGSFGTV) and Lys49 contribute to the ATP site. Residue Asp141 is the Proton acceptor of the active site. Over residues 300 to 322 (LEEGGDEDEDSSEQEGMDSDDKD) the composition is skewed to acidic residues. 5 disordered regions span residues 300–492 (LEEG…KTLE), 515–636 (KKQQ…KSTP), 744–768 (ETNHLKERQVTETEQHIKQMTTEQR), 939–974 (SIEEQQKERLTLQQEEHRIQQESLKKQEQKKKGSVT), and 1040–1142 (EEQK…DNQD). Basic and acidic residues predominate over residues 323–336 (SDLKKSVGTSDRKS). Positions 355–365 (QRKSTGQNLQL) are enriched in polar residues. The span at 371–390 (QQSSSSSSSSSSSLSSQSLQ) shows a compositional bias: low complexity. The segment covering 391 to 413 (PQAVNKSTDRLSANINGSNTKSN) has biased composition (polar residues). Residues 421-452 (AAASASASSLNLSTGNLQQSLSGSGSITTNSG) are compositionally biased toward low complexity. Positions 467–477 (SSDDRSPDIRT) are enriched in basic and acidic residues. Residues 541–554 (KQNAAKATQQQKQS) are compositionally biased toward low complexity. Basic and acidic residues-rich tracts occupy residues 555–588 (AAKEEKIQKQHKVEKETLSRQQKADREQLLKKNQ), 597–635 (KVTDQQKQQQREFKDQQKQQQKQKEHEFKDQNKVLDKST), 744–760 (ETNHLKERQVTETEQHI), and 939–969 (SIEEQQKERLTLQQEEHRIQQESLKKQEQKK). Residues 716-1050 (QEYHTVLREN…EQKKSKLKLK (335 aa)) are a coiled coil. A compositionally biased stretch (low complexity) spans 1068–1091 (TGTTPPSTSSNQKTLNNSNGASSN).

The protein belongs to the protein kinase superfamily. STE Ser/Thr protein kinase family. STE20 subfamily. It depends on Mg(2+) as a cofactor.

The catalysed reaction is L-seryl-[protein] + ATP = O-phospho-L-seryl-[protein] + ADP + H(+). It carries out the reaction L-threonyl-[protein] + ATP = O-phospho-L-threonyl-[protein] + ADP + H(+). In Dictyostelium discoideum (Social amoeba), this protein is Serine/threonine-protein kinase dst2.